The sequence spans 450 residues: Phosphoglucosamine mutase (450 aa).

The Phosphoserine intermediate role is filled by Ser-101. Mg(2+) is bound by residues Ser-101, Asp-242, Asp-244, and Asp-246. Phosphoserine is present on Ser-101.

It belongs to the phosphohexose mutase family. Mg(2+) is required as a cofactor. Post-translationally, activated by phosphorylation.

It catalyses the reaction alpha-D-glucosamine 1-phosphate = D-glucosamine 6-phosphate. Functionally, catalyzes the conversion of glucosamine-6-phosphate to glucosamine-1-phosphate. The polypeptide is Phosphoglucosamine mutase (Rhodopseudomonas palustris (strain BisA53)).